A 555-amino-acid chain; its full sequence is Putative polyketide hydroxylase (555 aa).

FAD is bound by residues 16–45 and 303–313; these read PVLV…LVER and YRAGRVFLAGD. Residues 366–395 form a disordered region; that stretch reads ATTARAAARSAEHSHPGFAPPPGTSGGPQG.

The protein belongs to the PheA/TfdB FAD monooxygenase family. FAD is required as a cofactor.

Its function is as follows. Involved in developmentally regulated synthesis of a compound biosynthetically related to polyketide antibiotics which is essential for spore color in Streptomyces halstedii. This chain is Putative polyketide hydroxylase (schC), found in Streptomyces halstedii.